The sequence spans 785 residues: Mitochondrial intermediate peptidase (785 aa).

A mitochondrion-targeting transit peptide spans 1–27 (MLKAVMPRPWVCSRCVKRQIQSSRGLA). The disordered stretch occupies residues 26–52 (LATASTQYREPRPVPTDHSAPGAKHDD). Histidine 566 is a binding site for Zn(2+). Glutamate 567 is an active-site residue. Residues histidine 570 and histidine 573 each contribute to the Zn(2+) site.

Belongs to the peptidase M3 family. It depends on Zn(2+) as a cofactor.

It localises to the mitochondrion matrix. The catalysed reaction is Release of an N-terminal octapeptide as second stage of processing of some proteins imported into the mitochondrion.. Functionally, cleaves proteins, imported into the mitochondrion, to their mature size. While most mitochondrial precursor proteins are processed to the mature form in one step by mitochondrial processing peptidase (MPP), the sequential cleavage by MIP of an octapeptide after initial processing by MPP is a required step for a subgroup of nuclear-encoded precursor proteins destined for the matrix or the inner membrane. The polypeptide is Mitochondrial intermediate peptidase (oct1) (Sclerotinia sclerotiorum (strain ATCC 18683 / 1980 / Ss-1) (White mold)).